The sequence spans 122 residues: Large ribosomal subunit protein uL24 (122 aa).

Residues 43–64 (IRKHHRRDMPTPQGGTTKGGII) are disordered.

This sequence belongs to the universal ribosomal protein uL24 family. In terms of assembly, part of the 50S ribosomal subunit.

One of two assembly initiator proteins, it binds directly to the 5'-end of the 23S rRNA, where it nucleates assembly of the 50S subunit. Its function is as follows. One of the proteins that surrounds the polypeptide exit tunnel on the outside of the subunit. This chain is Large ribosomal subunit protein uL24, found in Cutibacterium acnes (strain DSM 16379 / KPA171202) (Propionibacterium acnes).